The following is a 189-amino-acid chain: MSKLAAFNFQQWIDEHQHLLKPPVGNVQIWENTDMMVTVVGGPNQRTDFHDDPVEEFFYQLKGDMVLKIIEEGKCHDLFIREGDIFFLPPHVRHSPQRPMPGSIGLVIEPKRPEGAKDAFEWYCFKCDGLVHRVEVLLKSIVRDLPPIYQAFYQDEQARTCPQCGELHPGKEPPQGWVTLLENKEQDKS.

Residue Arg46 participates in O2 binding. Positions 50, 56, and 94 each coordinate Fe cation. Glu56 provides a ligand contact to substrate. 2 residues coordinate substrate: Arg98 and Glu109. Cys124, Cys127, Cys161, and Cys164 together coordinate Fe cation.

This sequence belongs to the 3-HAO family. In terms of assembly, homodimer. It depends on Fe(2+) as a cofactor.

The catalysed reaction is 3-hydroxyanthranilate + O2 = (2Z,4Z)-2-amino-3-carboxymuconate 6-semialdehyde. Its pathway is cofactor biosynthesis; NAD(+) biosynthesis; quinolinate from L-kynurenine: step 3/3. Its function is as follows. Catalyzes the oxidative ring opening of 3-hydroxyanthranilate to 2-amino-3-carboxymuconate semialdehyde, which spontaneously cyclizes to quinolinate. The protein is 3-hydroxyanthranilate 3,4-dioxygenase of Shewanella woodyi (strain ATCC 51908 / MS32).